Consider the following 400-residue polypeptide: Golgin-45 (400 aa).

The tract at residues 1 to 36 is disordered; it reads MEKMTTLKSFESKGILTSTPIRGAGDGMETEEPPKS. A Tankyrase-binding motif motif is present at residues 22 to 26; sequence RGAGD. Phosphoserine is present on S53. Residues 126 to 263 adopt a coiled-coil conformation; that stretch reads LSEVKKVLEK…LSEREQFRQE (138 aa). A Phosphoserine modification is found at S356. The interval 394-400 is essential for interaction with GORASP2; the sequence is QGELLAL.

Interacts with GORASP2. Interacts with the GTP-bound form of RAB2, but not with other Golgi Rab proteins. Identified in a complex with RAB2 and GORASP2. ADP-ribosylated by tankyrase TNKS and TNKS2. Poly-ADP-ribosylated protein is recognized by RNF146, followed by ubiquitination. Post-translationally, ubiquitinated by RNF146 when poly-ADP-ribosylated, leading to its degradation.

It is found in the golgi apparatus membrane. In terms of biological role, required for normal Golgi structure and for protein transport from the endoplasmic reticulum (ER) through the Golgi apparatus to the cell surface. The sequence is that of Golgin-45 from Rattus norvegicus (Rat).